Here is a 1024-residue protein sequence, read N- to C-terminus: RNA cytidine acetyltransferase (1024 aa).

287 to 296 (GRGKSAALGL) provides a ligand contact to ATP. Residue lysine 426 is modified to N6-acetyllysine. Arginine 470 provides a ligand contact to ATP. The region spanning 558 to 753 (CLLPPVPPTQ…HSCIMLKTLA (196 aa)) is the N-acetyltransferase domain. Acetyl-CoA-binding positions include 629 to 631 (IAV) and 636 to 642 (QGMGYGS). The segment at 702–1024 (PAERLDYLGV…RKDMKLKRKK (323 aa)) is required for localization to the nucleolus and midbody. Threonine 716 carries the post-translational modification Phosphothreonine. Arginine 725 contacts acetyl-CoA. Residues serine 934, serine 984, and serine 987 each carry the phosphoserine modification. A disordered region spans residues 990–1024 (SDKKRKLETKQEPKQSKKLKKRDNNRKDMKLKRKK). The segment covering 1005 to 1024 (SKKLKKRDNNRKDMKLKRKK) has biased composition (basic residues).

Belongs to the RNA cytidine acetyltransferase family. NAT10 subfamily. In terms of assembly, part of the small subunit (SSU) processome, composed of more than 70 proteins and the RNA chaperone small nucleolar RNA (snoRNA) U3. Interacts with THUMPD1. Interacts with SUN1 (via N-terminus). Interacts with TERT.

The protein resides in the nucleus. It is found in the nucleolus. The enzyme catalyses a cytidine in 18S rRNA + acetyl-CoA + ATP + H2O = an N(4)-acetylcytidine in 18S rRNA + ADP + phosphate + CoA + H(+). It carries out the reaction a cytidine in tRNA + acetyl-CoA + ATP + H2O = an N(4)-acetylcytidine in tRNA + ADP + phosphate + CoA + H(+). It catalyses the reaction a cytidine in mRNA + acetyl-CoA + ATP + H2O = an N(4)-acetylcytidine in mRNA + ADP + phosphate + CoA + H(+). RNA cytidine acetyltransferase that catalyzes the formation of N(4)-acetylcytidine (ac4C) modification on mRNAs, 18S rRNA and tRNAs. Catalyzes ac4C modification of a broad range of mRNAs, enhancing mRNA stability and translation. mRNA ac4C modification is frequently present within wobble cytidine sites and promotes translation efficiency. Mediates the formation of ac4C at position 1842 in 18S rRNA. May also catalyze the formation of ac4C at position 1337 in 18S rRNA. Required for early nucleolar cleavages of precursor rRNA at sites A0, A1 and A2 during 18S rRNA synthesis. Catalyzes the formation of ac4C in serine and leucine tRNAs. Requires the tRNA-binding adapter protein THUMPD1 for full tRNA acetyltransferase activity but not for 18S rRNA acetylation. In addition to RNA acetyltransferase activity, also able to acetylate lysine residues of proteins, such as histones, microtubules, p53/TP53 and MDM2, in vitro. The relevance of the protein lysine acetyltransferase activity is however unsure in vivo. Activates telomerase activity by stimulating the transcription of TERT, and may also regulate telomerase function by affecting the balance of telomerase subunit assembly, disassembly, and localization. Involved in the regulation of centrosome duplication by acetylating CENATAC during mitosis, promoting SASS6 proteasome degradation. Part of the small subunit (SSU) processome, first precursor of the small eukaryotic ribosomal subunit. During the assembly of the SSU processome in the nucleolus, many ribosome biogenesis factors, an RNA chaperone and ribosomal proteins associate with the nascent pre-rRNA and work in concert to generate RNA folding, modifications, rearrangements and cleavage as well as targeted degradation of pre-ribosomal RNA by the RNA exosome. In Mus musculus (Mouse), this protein is RNA cytidine acetyltransferase.